Consider the following 391-residue polypeptide: Phosphoglycerate kinase (391 aa).

Residues 16–18, R31, 54–57, R108, and R141 contribute to the substrate site; these read DLN and HLGR. Residues K192, E314, and 340-343 each bind ATP; that span reads GGDT.

It belongs to the phosphoglycerate kinase family. In terms of assembly, monomer.

The protein localises to the cytoplasm. The catalysed reaction is (2R)-3-phosphoglycerate + ATP = (2R)-3-phospho-glyceroyl phosphate + ADP. The protein operates within carbohydrate degradation; glycolysis; pyruvate from D-glyceraldehyde 3-phosphate: step 2/5. This Coxiella burnetii (strain RSA 493 / Nine Mile phase I) protein is Phosphoglycerate kinase.